Consider the following 354-residue polypeptide: S-adenosylmethionine:tRNA ribosyltransferase-isomerase (354 aa).

The protein belongs to the QueA family. Monomer.

It is found in the cytoplasm. The catalysed reaction is 7-aminomethyl-7-carbaguanosine(34) in tRNA + S-adenosyl-L-methionine = epoxyqueuosine(34) in tRNA + adenine + L-methionine + 2 H(+). It participates in tRNA modification; tRNA-queuosine biosynthesis. In terms of biological role, transfers and isomerizes the ribose moiety from AdoMet to the 7-aminomethyl group of 7-deazaguanine (preQ1-tRNA) to give epoxyqueuosine (oQ-tRNA). This chain is S-adenosylmethionine:tRNA ribosyltransferase-isomerase, found in Dichelobacter nodosus (strain VCS1703A).